A 103-amino-acid chain; its full sequence is uncharacterized protein (103 aa).

2 consecutive transmembrane segments (helical) span residues 13–33 and 77–97; these read LLPFIFIYLSVANKIMFYCIL and FSIYIYIYFFFYSFLCSPYLF.

The protein localises to the endoplasmic reticulum membrane. This is an uncharacterized protein from Schizosaccharomyces pombe (strain 972 / ATCC 24843) (Fission yeast).